A 343-amino-acid chain; its full sequence is 4-hydroxy-2-oxovalerate aldolase 1 (343 aa).

A Pyruvate carboxyltransferase domain is found at isoleucine 8 to serine 260. Arginine 16–aspartate 17 is a substrate binding site. Aspartate 17 provides a ligand contact to Mn(2+). The Proton acceptor role is filled by histidine 20. Substrate-binding residues include serine 170 and histidine 199. 2 residues coordinate Mn(2+): histidine 199 and histidine 201. Tyrosine 290 lines the substrate pocket.

The protein belongs to the 4-hydroxy-2-oxovalerate aldolase family.

The catalysed reaction is (S)-4-hydroxy-2-oxopentanoate = acetaldehyde + pyruvate. This Burkholderia cenocepacia (strain ATCC BAA-245 / DSM 16553 / LMG 16656 / NCTC 13227 / J2315 / CF5610) (Burkholderia cepacia (strain J2315)) protein is 4-hydroxy-2-oxovalerate aldolase 1 (bphI).